Consider the following 181-residue polypeptide: Putative adenylate kinase (181 aa).

ATP is bound by residues glycine 10, glycine 12, lysine 13, serine 14, and threonine 15. Residues 35–58 are NMP; the sequence is NITEVVSKNGLYLEKDIEMDSYVV. The interval 106 to 116 is LID; it reads SRNYSSEKVKE. ATP-binding residues include arginine 107 and lysine 147.

This sequence belongs to the adenylate kinase family. AK6 subfamily. As to quaternary structure, interacts with uS11. Not a structural component of 40S pre-ribosomes, but transiently interacts with them by binding to uS11.

It carries out the reaction AMP + ATP = 2 ADP. The enzyme catalyses ATP + H2O = ADP + phosphate + H(+). In terms of biological role, broad-specificity nucleoside monophosphate (NMP) kinase that catalyzes the reversible transfer of the terminal phosphate group between nucleoside triphosphates and monophosphates. Also has ATPase activity. Involved in the late maturation steps of the 30S ribosomal particles, specifically 16S rRNA maturation. While NMP activity is not required for ribosome maturation, ATPase activity is. Associates transiently with small ribosomal subunit protein uS11. ATP hydrolysis breaks the interaction with uS11. May temporarily remove uS11 from the ribosome to enable a conformational change of the ribosomal RNA that is needed for the final maturation step of the small ribosomal subunit. The polypeptide is Putative adenylate kinase (Methanococcus maripaludis (strain C7 / ATCC BAA-1331)).